A 792-amino-acid polypeptide reads, in one-letter code: Host cell factor 2 (792 aa).

Kelch repeat units follow at residues 34–79 (LMII…GFVC), 83–130 (RILV…RLGH), 207–255 (KMYV…VIGN), and 257–303 (MYIF…VSDS). The region spanning 359 to 449 (APSQVQLIKA…QPATKETSMK (91 aa)) is the Fibronectin type-III 1 domain. The segment at 399–447 (ASSDSSAAPNMQGVRMDPHRQGSNNIVPNSINDTINSTKTEQPATKETS) is disordered. The segment covering 419–445 (QGSNNIVPNSINDTINSTKTEQPATKE) has biased composition (polar residues). A Glycyl lysine isopeptide (Lys-Gly) (interchain with G-Cter in SUMO2) cross-link involves residue Lys-553. 2 consecutive Fibronectin type-III domains span residues 583–675 (TPSN…TCIP) and 677–787 (FPGA…GNNK).

As to quaternary structure, binds KMT2A/MLL1. Component of the MLL1/MLL complex, at least composed of KMT2A/MLL1, ASH2L, RBBP5, DPY30, WDR5, MEN1, HCFC1 and HCFC2. Interacts with TASOR. Highly expressed in testis. Detected at lower levels in spleen, thymus, prostate, ovary, small intestine and colon.

It localises to the cytoplasm. It is found in the nucleus. The polypeptide is Host cell factor 2 (HCFC2) (Homo sapiens (Human)).